Reading from the N-terminus, the 336-residue chain is MRRIGAFGGSTALWALLAAHVAGAFEPVSVGIAIGAVSALTGYLSYTDFYCRFTECCHEERPLNTSALKLDLEEKLFGQHLATEVILKALTGFRNNKNSKKPLTLSLHGWAGTGKNFISQIVAENLYPKGLKSNFVHLFVSTLHFPHEQKIKVYQDQLQKWIRGNVSACGSSVFIFDEMDKLHPGIIDAIKPFLDYYEQVDGISYRRAIFIFLSNAGGDLITKTALDFWRAGRKREEIQLKDLEPVLSVGVFNNKHSGLWHSGLIDKNLIDYFIPFLPLEYKHVKMCVRAEMRARGAAVDEDVVTSVADEMTFFPKDEKIYSDKGCKTVQSRLDFH.

The first 24 residues, 1 to 24, serve as a signal peptide directing secretion; the sequence is MRRIGAFGGSTALWALLAAHVAGA. N-linked (GlcNAc...) asparagine glycosylation is present at asparagine 64. 109–116 lines the ATP pocket; that stretch reads GWAGTGKN. Residue asparagine 165 is glycosylated (N-linked (GlcNAc...) asparagine).

Belongs to the ClpA/ClpB family. Torsin subfamily. As to quaternary structure, homohexamer. Interacts with TOR1A; the interaction may be specific of neural tissues. Interacts with TOR1AIP1; TOR1AIP1 is required for TOR1B location on the nuclear membrane. Interacts (ATP-bound) with TOR1AIP2; important for endoplasmic reticulum integrity. In terms of processing, N-glycosylated. Highly expressed in liver and muscle; lower expression levels are observed in brain (at protein level).

It localises to the endoplasmic reticulum lumen. The protein resides in the nucleus membrane. It carries out the reaction ATP + H2O = ADP + phosphate + H(+). In terms of biological role, may serve as a molecular chaperone assisting in the proper folding of secreted and/or membrane proteins. Plays a role in non-neural cells nuclear envelope and endoplasmic reticulum integrity. May have a redundant function with TOR1A in non-neural tissues. This Mus musculus (Mouse) protein is Torsin-1B (Tor1b).